The primary structure comprises 1466 residues: ABC transporter C family member 6 (1466 aa).

10 helical membrane passes run 16–36, 63–83, 91–111, 128–148, 158–178, 286–306, 322–339, 400–420, 425–445, and 512–532; these read SVLS…SWLF, LVLI…LLSC, WPFL…VYLF, VWWV…FVLY, FVIS…SCLW, IVLS…APYL, NQGY…LVEC, WFMH…WILY, LGSI…YPFA, and SVLW…CLLL. The ABC transmembrane type-1 1 domain occupies 286–567; that stretch reads IVLSALLAFV…LPETISMIVQ (282 aa). The 224-residue stretch at 601-824 folds into the ABC transporter 1 domain; sequence VEISNGTFSW…GTDFMELVGA (224 aa). Position 636–643 (636–643) interacts with ATP; it reads GTVGSGKS. The tract at residues 840–876 is disordered; sequence ASEKSTTDKENEVLHHKEKQENGSDNKPSGQLVQEEE. The span at 844-863 shows a compositional bias: basic and acidic residues; it reads STTDKENEVLHHKEKQENGS. A run of 3 helical transmembrane segments spans residues 890–910, 937–957, and 1026–1046; these read YMAL…QVLF, GFTL…CILI, and ILGI…VFIP. An ABC transmembrane type-1 2 domain is found at 900-1182; that stretch reads IPLILVVQVL…LIWTLCDLEN (283 aa). The ABC transporter 2 domain occupies 1219–1453; sequence ITICNLQVRY…RSSLFSKLVA (235 aa). 1253 to 1260 contacts ATP; sequence GRTGCGKS.

The protein belongs to the ABC transporter superfamily. ABCC family. Conjugate transporter (TC 3.A.1.208) subfamily. As to expression, ubiquitous.

It localises to the membrane. It catalyses the reaction ATP + H2O + xenobioticSide 1 = ADP + phosphate + xenobioticSide 2.. Pump for glutathione S-conjugates. This Arabidopsis thaliana (Mouse-ear cress) protein is ABC transporter C family member 6 (ABCC6).